A 466-amino-acid chain; its full sequence is uncharacterized protein (466 aa).

Residues 4–199 form the C2 NT-type domain; that stretch reads NHNSKAKRPK…IINVSLQLKL (196 aa). 3 disordered regions span residues 262–298, 374–393, and 400–452; these read AKPGTNATGNSTSIKSPTSTNHKSSEMTTKPGLSTTI, LGNKASSWPPNPSDDGYSTM, and EKKQ…LTDR. Residues 266–298 show a composition bias toward polar residues; the sequence is TNATGNSTSIKSPTSTNHKSSEMTTKPGLSTTI. Residues Ser-433 and Ser-439 each carry the phosphoserine modification.

The protein to S.pombe SpCC1494.08c.

This is an uncharacterized protein from Saccharomyces cerevisiae (strain ATCC 204508 / S288c) (Baker's yeast).